Here is a 293-residue protein sequence, read N- to C-terminus: Magnetosome protein MamB (293 aa).

Residues 1-12 are Cytoplasmic-facing; it reads MTTAACRKCRDE. The tract at residues 1–214 is transmembrane domain (TMD); the sequence is MTTAACRKCR…GLMDTSVEND (214 aa). The helical transmembrane segment at 13–33 threads the bilayer; it reads VIWWAFFINIGQTTYKGVLGV. The Lumenal portion of the chain corresponds to 34–78; that stretch reads LSGSAALVADAMHSGADVVATLVTMFSVKVSDKKADEKYPFGYGN. The chain crosses the membrane as a helical span at residues 79 to 99; sequence IQFIASSIVGLILFFGALYLM. The Cytoplasmic portion of the chain corresponds to 100-105; sequence YESTMQ. Residues 106–126 form a helical membrane-spanning segment; sequence IIAGNTSSPSPFAVLGAIVSI. The Lumenal portion of the chain corresponds to 127-158; it reads ATNELMFRYQSCVGRQNNSPAIIANAWDNRSD. The chain crosses the membrane as a helical span at residues 159-179; that stretch reads ALSSVAVLIGIVAAVVGFPIA. Topologically, residues 180–293 are cytoplasmic; that stretch reads DRLAAIGVGI…VGVTPVRIAA (114 aa). The interval 215–293 is C-terminal domain (CTD); it reads VLVDAYNIAK…VGVTPVRIAA (79 aa). Residues histidine 245, aspartate 247, and histidine 283 each coordinate Zn(2+).

The protein belongs to the cation diffusion facilitator (CDF) transporter (TC 2.A.4) family. As to quaternary structure, the isolated C-terminal domain (approximately 213-293) forms homodimers. Forms heterodimers with MamM.

The protein resides in the magnetosome membrane. Its function is as follows. Plays a dual, essential role in magnetosome formation; required for magnetosome vesicle formation as well as biomineralization. Probably binds and transports iron. Requires heterodimerization with MamM for stability. The protein is Magnetosome protein MamB (mamB) of Magnetospira sp. (strain QH-2) (Marine magnetic spirillum (strain QH-2)).